The primary structure comprises 102 residues: Putative RNA-binding protein RbpA (102 aa).

The RRM domain occupies 2–79; the sequence is SIYVGNLSYE…RDLKVNKAKP (78 aa). Positions 73–84 are enriched in basic and acidic residues; that stretch reads KVNKAKPREDRG. Residues 73–102 form a disordered region; the sequence is KVNKAKPREDRGPSGGNRGGYGGGGGRNRY. Gly residues predominate over residues 85 to 102; the sequence is PSGGNRGGYGGGGGRNRY.

This chain is Putative RNA-binding protein RbpA (rbpA), found in Nostoc sp. (strain PCC 7120 / SAG 25.82 / UTEX 2576).